Reading from the N-terminus, the 100-residue chain is Small ribosomal subunit protein uS14c (100 aa).

A compositionally biased stretch (basic and acidic residues) spans 28–45 (KKEIKKVPSLSEKMEIHG). The segment at 28–59 (KKEIKKVPSLSEKMEIHGKLQSPPRNSAPTRL) is disordered.

It belongs to the universal ribosomal protein uS14 family. As to quaternary structure, part of the 30S ribosomal subunit.

The protein resides in the plastid. It is found in the chloroplast. Binds 16S rRNA, required for the assembly of 30S particles. This Nandina domestica (Heavenly bamboo) protein is Small ribosomal subunit protein uS14c.